The following is a 227-amino-acid chain: Inner membrane lipoprotein SadB (227 aa).

The N-terminal stretch at Met-1 to Gly-21 is a signal peptide. The N-palmitoyl cysteine moiety is linked to residue Cys-22. Residue Cys-22 is the site of S-diacylglycerol cysteine attachment. The stretch at Val-31–Thr-68 forms a coiled coil.

Homotrimer.

It is found in the cell inner membrane. Its function is as follows. Required for proper surface expression of the autotransporter adhesin SadA. Could be directly involved in the biogenesis of functionally active SadA. In Salmonella typhimurium (strain LT2 / SGSC1412 / ATCC 700720), this protein is Inner membrane lipoprotein SadB.